The chain runs to 118 residues: Small ribosomal subunit protein uS13 (118 aa).

The disordered stretch occupies residues 94-118 (SLPLRGQRTKTNARTRKGPRKPIRK).

The protein belongs to the universal ribosomal protein uS13 family. In terms of assembly, part of the 30S ribosomal subunit. Forms a loose heterodimer with protein S19. Forms two bridges to the 50S subunit in the 70S ribosome.

Its function is as follows. Located at the top of the head of the 30S subunit, it contacts several helices of the 16S rRNA. In the 70S ribosome it contacts the 23S rRNA (bridge B1a) and protein L5 of the 50S subunit (bridge B1b), connecting the 2 subunits; these bridges are implicated in subunit movement. Contacts the tRNAs in the A and P-sites. This is Small ribosomal subunit protein uS13 from Shewanella sediminis (strain HAW-EB3).